Reading from the N-terminus, the 290-residue chain is 4-diphosphocytidyl-2-C-methyl-D-erythritol kinase (290 aa).

Residue K8 is part of the active site. Residue 89 to 99 (PIGAGVGGGSS) coordinates ATP. The active site involves D131.

The protein belongs to the GHMP kinase family. IspE subfamily.

The catalysed reaction is 4-CDP-2-C-methyl-D-erythritol + ATP = 4-CDP-2-C-methyl-D-erythritol 2-phosphate + ADP + H(+). It functions in the pathway isoprenoid biosynthesis; isopentenyl diphosphate biosynthesis via DXP pathway; isopentenyl diphosphate from 1-deoxy-D-xylulose 5-phosphate: step 3/6. Catalyzes the phosphorylation of the position 2 hydroxy group of 4-diphosphocytidyl-2C-methyl-D-erythritol. The chain is 4-diphosphocytidyl-2-C-methyl-D-erythritol kinase from Chlamydia felis (strain Fe/C-56) (Chlamydophila felis).